Reading from the N-terminus, the 257-residue chain is Phosphonates import ATP-binding protein PhnC (257 aa).

One can recognise an ABC transporter domain in the interval 2–246 (IEFRNVSKVY…KFAEIYGDVV (245 aa)). 35–42 (GLSGAGKS) contacts ATP.

The protein belongs to the ABC transporter superfamily. Phosphonates importer (TC 3.A.1.9.1) family. In terms of assembly, the complex is composed of two ATP-binding proteins (PhnC), two transmembrane proteins (PhnE) and a solute-binding protein (PhnD).

Its subcellular location is the cell membrane. The enzyme catalyses phosphonate(out) + ATP + H2O = phosphonate(in) + ADP + phosphate + H(+). Part of the ABC transporter complex PhnCDE involved in phosphonates import. Responsible for energy coupling to the transport system. The sequence is that of Phosphonates import ATP-binding protein PhnC from Bacillus anthracis.